The primary structure comprises 513 residues: 2-isopropylmalate synthase (513 aa).

Positions 7-269 (VYIFDTTLRD…TTGIVTEELF (263 aa)) constitute a Pyruvate carboxyltransferase domain. 4 residues coordinate Mn(2+): aspartate 16, histidine 204, histidine 206, and asparagine 240. Positions 393–513 (ALQFLSVHCG…KEEERTCPQL (121 aa)) are regulatory domain.

The protein belongs to the alpha-IPM synthase/homocitrate synthase family. LeuA type 1 subfamily. In terms of assembly, homodimer. It depends on Mn(2+) as a cofactor.

It is found in the cytoplasm. It catalyses the reaction 3-methyl-2-oxobutanoate + acetyl-CoA + H2O = (2S)-2-isopropylmalate + CoA + H(+). It functions in the pathway amino-acid biosynthesis; L-leucine biosynthesis; L-leucine from 3-methyl-2-oxobutanoate: step 1/4. Its function is as follows. Catalyzes the condensation of the acetyl group of acetyl-CoA with 3-methyl-2-oxobutanoate (2-ketoisovalerate) to form 3-carboxy-3-hydroxy-4-methylpentanoate (2-isopropylmalate). The polypeptide is 2-isopropylmalate synthase (Solidesulfovibrio magneticus (strain ATCC 700980 / DSM 13731 / RS-1) (Desulfovibrio magneticus)).